The following is a 336-amino-acid chain: Ketol-acid reductoisomerase (NADP(+)) (336 aa).

A KARI N-terminal Rossmann domain is found at 1-182 (MAVIYYDKDA…GVTRAGVIET (182 aa)). Residues 25 to 28 (YGSQ), Arg-48, Ser-51, Ser-53, and 83 to 86 (DENQ) each bind NADP(+). His-108 is a catalytic residue. Gly-134 is a binding site for NADP(+). The KARI C-terminal knotted domain maps to 183–328 (TFKEETETDL…KELRKMMPWL (146 aa)). 4 residues coordinate Mg(2+): Asp-191, Glu-195, Glu-227, and Glu-231. Ser-252 serves as a coordination point for substrate.

This sequence belongs to the ketol-acid reductoisomerase family. Mg(2+) is required as a cofactor.

It carries out the reaction (2R)-2,3-dihydroxy-3-methylbutanoate + NADP(+) = (2S)-2-acetolactate + NADPH + H(+). It catalyses the reaction (2R,3R)-2,3-dihydroxy-3-methylpentanoate + NADP(+) = (S)-2-ethyl-2-hydroxy-3-oxobutanoate + NADPH + H(+). It participates in amino-acid biosynthesis; L-isoleucine biosynthesis; L-isoleucine from 2-oxobutanoate: step 2/4. It functions in the pathway amino-acid biosynthesis; L-valine biosynthesis; L-valine from pyruvate: step 2/4. Involved in the biosynthesis of branched-chain amino acids (BCAA). Catalyzes an alkyl-migration followed by a ketol-acid reduction of (S)-2-acetolactate (S2AL) to yield (R)-2,3-dihydroxy-isovalerate. In the isomerase reaction, S2AL is rearranged via a Mg-dependent methyl migration to produce 3-hydroxy-3-methyl-2-ketobutyrate (HMKB). In the reductase reaction, this 2-ketoacid undergoes a metal-dependent reduction by NADPH to yield (R)-2,3-dihydroxy-isovalerate. The chain is Ketol-acid reductoisomerase (NADP(+)) from Thermotoga petrophila (strain ATCC BAA-488 / DSM 13995 / JCM 10881 / RKU-1).